Reading from the N-terminus, the 334-residue chain is GTP 3',8-cyclase (334 aa).

In terms of domain architecture, Radical SAM core spans 13–239 (RFHRKFYYLR…KVKAANDGPA (227 aa)). R22 contributes to the GTP binding site. C29 and C33 together coordinate [4Fe-4S] cluster. An S-adenosyl-L-methionine-binding site is contributed by Y35. C36 lines the [4Fe-4S] cluster pocket. R73 is a GTP binding site. An S-adenosyl-L-methionine-binding site is contributed by G77. GTP is bound at residue T104. S128 lines the S-adenosyl-L-methionine pocket. A GTP-binding site is contributed by K165. M199 is a binding site for S-adenosyl-L-methionine. Residues C262 and C265 each coordinate [4Fe-4S] cluster. Residue 267–269 (RLR) coordinates GTP. Position 279 (C279) interacts with [4Fe-4S] cluster.

The protein belongs to the radical SAM superfamily. MoaA family. As to quaternary structure, monomer and homodimer. Requires [4Fe-4S] cluster as cofactor.

It catalyses the reaction GTP + AH2 + S-adenosyl-L-methionine = (8S)-3',8-cyclo-7,8-dihydroguanosine 5'-triphosphate + 5'-deoxyadenosine + L-methionine + A + H(+). Its pathway is cofactor biosynthesis; molybdopterin biosynthesis. Functionally, catalyzes the cyclization of GTP to (8S)-3',8-cyclo-7,8-dihydroguanosine 5'-triphosphate. The sequence is that of GTP 3',8-cyclase from Vibrio vulnificus (strain YJ016).